A 254-amino-acid polypeptide reads, in one-letter code: MKRLKKIVLCISFLFLTIFIGGCGMGKEAEIKKSFEKTLSMYPIKNLEDLYDKEGYRDDQFDKKDKGTWIINSEMATQNKGEALKIKGMVLYMNRNTKTTKGYYYVNAIKNDKDGRPQENEKRYPVKMIDNKVIPTKEIKDENIKTEIKNFKFFVQYGNFKDLKNYKDGDISYNPEAPIYSAKYQLTNDDYNVKQLRERYDIPTNKAPKLLLKGSGNLKGSSVGYKNIEFTFVEEKGKNIYFSDSLDYKKSGEV.

Residues 1–22 (MKRLKKIVLCISFLFLTIFIGG) form the signal peptide. Cysteine 23 carries the N-palmitoyl cysteine lipid modification. Cysteine 23 carries the S-diacylglycerol cysteine lipid modification.

Belongs to the staphylococcal tandem lipoprotein family.

It is found in the cell membrane. This is an uncharacterized protein from Staphylococcus aureus (strain MSSA476).